The sequence spans 70 residues: Conotoxin Lt11.6 (70 aa).

The first 26 residues, 1-26 (MMFRLTSVGSFLLVIVFLNLVVLTNA), serve as a signal peptide directing secretion. 4 disulfide bridges follow: cysteine 27/cysteine 41, cysteine 34/cysteine 46, cysteine 40/cysteine 50, and cysteine 45/cysteine 54. The propeptide occupies 58–70 (AQRQKLLRSFGQR).

The protein belongs to the conotoxin I2 superfamily. As to expression, expressed by the venom duct.

The protein resides in the secreted. The polypeptide is Conotoxin Lt11.6 (Conus litteratus (Lettered cone)).